The sequence spans 129 residues: DNA-directed RNA polymerase subunit omega (129 aa).

Positions 76 to 100 (EVDEPEPEAVPMIASGDSSGGEDSD) are disordered.

Belongs to the RNA polymerase subunit omega family. As to quaternary structure, the RNAP catalytic core consists of 2 alpha, 1 beta, 1 beta' and 1 omega subunit. When a sigma factor is associated with the core the holoenzyme is formed, which can initiate transcription.

It carries out the reaction RNA(n) + a ribonucleoside 5'-triphosphate = RNA(n+1) + diphosphate. Its function is as follows. Promotes RNA polymerase assembly. Latches the N- and C-terminal regions of the beta' subunit thereby facilitating its interaction with the beta and alpha subunits. In Xanthobacter autotrophicus (strain ATCC BAA-1158 / Py2), this protein is DNA-directed RNA polymerase subunit omega.